Reading from the N-terminus, the 109-residue chain is NFSVFAMSADGDAKILYYTGRNKAIVWSGEELGAKLAQEDPSFHFSRVEANVGAPQVNYRQSGGQGQFADITVRFEPMDPGSGYEFKMLEPIMKRGQINSFGDKPGGLK.

Belongs to the GTP-binding elongation factor family. EF-G/EF-2 subfamily.

It localises to the plastid. It is found in the chloroplast. It participates in protein biosynthesis; polypeptide chain elongation. Functionally, chloroplast-localized elongation factor EF-G involved in protein synthesis in plastids. Catalyzes the GTP-dependent ribosomal translocation step during translation elongation. During this step, the ribosome changes from the pre-translocational (PRE) to the post-translocational (POST) state as the newly formed A-site-bound peptidyl-tRNA and P-site-bound deacylated tRNA move to the P and E sites, respectively. Catalyzes the coordinated movement of the two tRNA molecules, the mRNA and conformational changes in the ribosome. The chain is Elongation factor G, chloroplastic from Arachis hypogaea (Peanut).